A 176-amino-acid chain; its full sequence is MTVPNHQQDISDSDLESRPSKTRLKQEMHALQVLGERLVELEPARITELDLPEKLTDALLEARRITSHGARRRQMQFIGKLMRAIDPVPVQEKLDAWQHSSLKHTAWLHQLERWRDRLISDEAAVTEFVQSYPQTDVRQLRTLLRNVEKEKLANKPPKSFRALFQLLRQIIPEISA.

The segment covering methionine 1 to isoleucine 10 has biased composition (polar residues). Residues methionine 1–threonine 22 form a disordered region.

This sequence belongs to the DarP family.

The protein resides in the cytoplasm. In terms of biological role, member of a network of 50S ribosomal subunit biogenesis factors which assembles along the 30S-50S interface, preventing incorrect 23S rRNA structures from forming. Promotes peptidyl transferase center (PTC) maturation. This is Dual-action ribosomal maturation protein DarP from Nitrosomonas eutropha (strain DSM 101675 / C91 / Nm57).